Reading from the N-terminus, the 343-residue chain is 3-dehydroquinate synthase (343 aa).

Residues 61-66, 95-99, 119-120, lysine 132, lysine 141, and 159-162 contribute to the NAD(+) site; these read SGEKYK, GVISD, TT, and FLKT. Residues glutamate 174, histidine 231, and histidine 248 each coordinate Zn(2+).

Belongs to the sugar phosphate cyclases superfamily. Dehydroquinate synthase family. It depends on Co(2+) as a cofactor. Zn(2+) serves as cofactor. NAD(+) is required as a cofactor.

Its subcellular location is the cytoplasm. It catalyses the reaction 7-phospho-2-dehydro-3-deoxy-D-arabino-heptonate = 3-dehydroquinate + phosphate. It functions in the pathway metabolic intermediate biosynthesis; chorismate biosynthesis; chorismate from D-erythrose 4-phosphate and phosphoenolpyruvate: step 2/7. In terms of biological role, catalyzes the conversion of 3-deoxy-D-arabino-heptulosonate 7-phosphate (DAHP) to dehydroquinate (DHQ). The sequence is that of 3-dehydroquinate synthase from Helicobacter pylori (strain P12).